We begin with the raw amino-acid sequence, 165 residues long: 3-isopropylmalate dehydratase small subunit 2 (165 aa).

This sequence belongs to the LeuD family. LeuD type 2 subfamily. As to quaternary structure, heterodimer of LeuC and LeuD.

The enzyme catalyses (2R,3S)-3-isopropylmalate = (2S)-2-isopropylmalate. It functions in the pathway amino-acid biosynthesis; L-leucine biosynthesis; L-leucine from 3-methyl-2-oxobutanoate: step 2/4. Functionally, catalyzes the isomerization between 2-isopropylmalate and 3-isopropylmalate, via the formation of 2-isopropylmaleate. This chain is 3-isopropylmalate dehydratase small subunit 2 (leuD2), found in Archaeoglobus fulgidus (strain ATCC 49558 / DSM 4304 / JCM 9628 / NBRC 100126 / VC-16).